We begin with the raw amino-acid sequence, 444 residues long: N-succinylarginine dihydrolase (444 aa).

Substrate contacts are provided by residues 19-28 (SGLSFGNVAS), Asn-110, and 137-138 (HR). Glu-174 is a catalytic residue. Arg-214 provides a ligand contact to substrate. The active site involves His-250. Positions 252 and 362 each coordinate substrate. Cys-368 serves as the catalytic Nucleophile.

It belongs to the succinylarginine dihydrolase family. Homodimer.

The catalysed reaction is N(2)-succinyl-L-arginine + 2 H2O + 2 H(+) = N(2)-succinyl-L-ornithine + 2 NH4(+) + CO2. It functions in the pathway amino-acid degradation; L-arginine degradation via AST pathway; L-glutamate and succinate from L-arginine: step 2/5. In terms of biological role, catalyzes the hydrolysis of N(2)-succinylarginine into N(2)-succinylornithine, ammonia and CO(2). This Photobacterium profundum (strain SS9) protein is N-succinylarginine dihydrolase.